We begin with the raw amino-acid sequence, 321 residues long: Phospho-N-acetylmuramoyl-pentapeptide-transferase (321 aa).

A run of 10 helical transmembrane segments spans residues 1-21 (MIFI…PILI), 50-70 (MGGL…IIFV), 76-96 (IILL…DDYI), 112-132 (FLAQ…FHLV), 140-160 (IPFV…IVFW), 176-196 (GLAT…SYML), 200-220 (AIGI…PYNL), 225-245 (VFMG…ISIM), 250-270 (LSLI…MLQV), and 300-320 (VVTV…WIGV).

This sequence belongs to the glycosyltransferase 4 family. MraY subfamily. It depends on Mg(2+) as a cofactor.

The protein localises to the cell membrane. The catalysed reaction is UDP-N-acetyl-alpha-D-muramoyl-L-alanyl-gamma-D-glutamyl-L-lysyl-D-alanyl-D-alanine + di-trans,octa-cis-undecaprenyl phosphate = Mur2Ac(oyl-L-Ala-gamma-D-Glu-L-Lys-D-Ala-D-Ala)-di-trans,octa-cis-undecaprenyl diphosphate + UMP. The protein operates within cell wall biogenesis; peptidoglycan biosynthesis. Its function is as follows. Catalyzes the initial step of the lipid cycle reactions in the biosynthesis of the cell wall peptidoglycan: transfers peptidoglycan precursor phospho-MurNAc-pentapeptide from UDP-MurNAc-pentapeptide onto the lipid carrier undecaprenyl phosphate, yielding undecaprenyl-pyrophosphoryl-MurNAc-pentapeptide, known as lipid I. The protein is Phospho-N-acetylmuramoyl-pentapeptide-transferase of Staphylococcus epidermidis (strain ATCC 35984 / DSM 28319 / BCRC 17069 / CCUG 31568 / BM 3577 / RP62A).